The sequence spans 379 residues: Armadillo repeat-containing X-linked protein 3 (379 aa).

Topologically, residues 1–6 (MGYARK) are mitochondrial intermembrane. 2 mitochondrion outer membrane (MOM)-targeting sequence regions span residues 1–6 (MGYARK) and 26–37 (RLTRGRKQNKEK). The chain crosses the membrane as a helical; Signal-anchor span at residues 7 to 29 (VGWVTAGLVIGAGACYCIYRLTR). The Cytoplasmic portion of the chain corresponds to 30-379 (GRKQNKEKMA…TERMFPKSQE (350 aa)). Positions 34 to 69 (NKEKMAEGGPGDVEDAGDCSGARYNDWSDDDDDSNE) are disordered. A phosphoserine mark is found at serine 61, serine 67, and serine 72. The nuclear localization signal stretch occupies residues 89 to 98 (RARARARARA). At serine 110 the chain carries Phosphoserine. 3 ARM repeats span residues 111-151 (PNSD…NNAA), 153-192 (AFNRDIIRDLGGLPIVAKILNTRDPIVKEKALIVLNNLSV), and 233-272 (VTNEYQHILANSISDFFRLFSAGNEETKLQVLKLLLNLAE).

It belongs to the eutherian X-chromosome-specific Armcx family. As to quaternary structure, interacts (via ARM domain) with MIRO1, MIRO2 and TRAK2. The interaction with Miro is calcium-dependent. Interacts with Sox10.

It is found in the mitochondrion outer membrane. The protein localises to the cytoplasm. It localises to the nucleus. In terms of biological role, regulates mitochondrial aggregation and transport in axons in living neurons. May link mitochondria to the Trak2-kinesin motor complex via its interaction with Miro and Trak2. Mitochondrial distribution and dynamics is regulated through Armcx3 protein degradation, which is promoted by PCK and negatively regulated by Wnt1. Enhances the Sox10-mediated transactivation of the neuronal acetylcholine receptor subunit alpha-3 and beta-4 subunit gene promoters. The polypeptide is Armadillo repeat-containing X-linked protein 3 (Armcx3) (Rattus norvegicus (Rat)).